The primary structure comprises 649 residues: Pesticidal crystal protein Cry3Ca (649 aa).

The segment covering 1 to 13 (MNPNNRSEHDTIK) has biased composition (basic and acidic residues). Residues 1–29 (MNPNNRSEHDTIKATENNEVSNNHAQYPL) form a disordered region. Positions 14 to 25 (ATENNEVSNNHA) are enriched in polar residues.

The protein belongs to the delta endotoxin family.

In terms of biological role, promotes colloidosmotic lysis by binding to the midgut epithelial cells of Coleoptera. The polypeptide is Pesticidal crystal protein Cry3Ca (cry3Ca) (Bacillus thuringiensis subsp. kurstaki).